We begin with the raw amino-acid sequence, 667 residues long: 1-deoxy-D-xylulose-5-phosphate synthase (667 aa).

Thiamine diphosphate is bound by residues His-73 and 113-115 (SHA). Position 145 (Asp-145) interacts with Mg(2+). Residues 146–147 (GA), Asn-175, Tyr-297, and Glu-379 contribute to the thiamine diphosphate site. Asn-175 lines the Mg(2+) pocket.

The protein belongs to the transketolase family. DXPS subfamily. Homodimer. Mg(2+) is required as a cofactor. Requires thiamine diphosphate as cofactor.

It catalyses the reaction D-glyceraldehyde 3-phosphate + pyruvate + H(+) = 1-deoxy-D-xylulose 5-phosphate + CO2. Its pathway is metabolic intermediate biosynthesis; 1-deoxy-D-xylulose 5-phosphate biosynthesis; 1-deoxy-D-xylulose 5-phosphate from D-glyceraldehyde 3-phosphate and pyruvate: step 1/1. In terms of biological role, catalyzes the acyloin condensation reaction between C atoms 2 and 3 of pyruvate and glyceraldehyde 3-phosphate to yield 1-deoxy-D-xylulose-5-phosphate (DXP). The protein is 1-deoxy-D-xylulose-5-phosphate synthase of Kocuria rhizophila (strain ATCC 9341 / DSM 348 / NBRC 103217 / DC2201).